The sequence spans 344 residues: N-acetyl-gamma-glutamyl-phosphate reductase (344 aa).

The active site involves C150.

It belongs to the NAGSA dehydrogenase family. Type 1 subfamily.

Its subcellular location is the cytoplasm. The enzyme catalyses N-acetyl-L-glutamate 5-semialdehyde + phosphate + NADP(+) = N-acetyl-L-glutamyl 5-phosphate + NADPH + H(+). It participates in amino-acid biosynthesis; L-arginine biosynthesis; N(2)-acetyl-L-ornithine from L-glutamate: step 3/4. In terms of biological role, catalyzes the NADPH-dependent reduction of N-acetyl-5-glutamyl phosphate to yield N-acetyl-L-glutamate 5-semialdehyde. The protein is N-acetyl-gamma-glutamyl-phosphate reductase of Pseudomonas fluorescens (strain Pf0-1).